The following is a 94-amino-acid chain: Phosphoribosyl-ATP pyrophosphatase (94 aa).

Belongs to the PRA-PH family.

Its subcellular location is the cytoplasm. The enzyme catalyses 1-(5-phospho-beta-D-ribosyl)-ATP + H2O = 1-(5-phospho-beta-D-ribosyl)-5'-AMP + diphosphate + H(+). It participates in amino-acid biosynthesis; L-histidine biosynthesis; L-histidine from 5-phospho-alpha-D-ribose 1-diphosphate: step 2/9. The sequence is that of Phosphoribosyl-ATP pyrophosphatase (hisE) from Sulfurisphaera tokodaii (strain DSM 16993 / JCM 10545 / NBRC 100140 / 7) (Sulfolobus tokodaii).